The primary structure comprises 71 residues: Small, acid-soluble spore protein 2 (71 aa).

This sequence belongs to the alpha/beta-type SASP family.

In terms of biological role, SASP are bound to spore DNA. They are double-stranded DNA-binding proteins that cause DNA to change to an a-like conformation. They protect the DNA backbone from chemical and enzymatic cleavage and are thus involved in dormant spore's high resistance to UV light. The protein is Small, acid-soluble spore protein 2 of Bacillus subtilis.